A 512-amino-acid chain; its full sequence is ATP synthase subunit alpha, chloroplastic (512 aa).

170-177 serves as a coordination point for ATP; sequence GDRQTGKT.

Belongs to the ATPase alpha/beta chains family. As to quaternary structure, F-type ATPases have 2 components, CF(1) - the catalytic core - and CF(0) - the membrane proton channel. CF(1) has five subunits: alpha(3), beta(3), gamma(1), delta(1), epsilon(1). CF(0) has four main subunits: a, b, b' and c.

It localises to the plastid. The protein resides in the chloroplast thylakoid membrane. It catalyses the reaction ATP + H2O + 4 H(+)(in) = ADP + phosphate + 5 H(+)(out). In terms of biological role, produces ATP from ADP in the presence of a proton gradient across the membrane. The alpha chain is a regulatory subunit. The sequence is that of ATP synthase subunit alpha, chloroplastic from Chaetosphaeridium globosum (Charophycean green alga).